A 227-amino-acid chain; its full sequence is Cytochrome c oxidase subunit 2 (227 aa).

The Mitochondrial intermembrane segment spans residues 1-14; that stretch reads MAYPFQMGLQDATS. The chain crosses the membrane as a helical span at residues 15 to 45; the sequence is PIMEELLHFHDHTLMIVFLISSLVLYIISLM. Over 46 to 59 the chain is Mitochondrial matrix; it reads LTTKLTHTSTMDAQ. A helical transmembrane segment spans residues 60–87; sequence EVETIWTILPAIILILIALPSLRILYMM. Residues 88–227 lie on the Mitochondrial intermembrane side of the membrane; sequence DEINNPSLTV…HFEKWSASLL (140 aa). Residues H161, C196, E198, C200, H204, and M207 each contribute to the Cu cation site. E198 serves as a coordination point for Mg(2+).

This sequence belongs to the cytochrome c oxidase subunit 2 family. In terms of assembly, component of the cytochrome c oxidase (complex IV, CIV), a multisubunit enzyme composed of 14 subunits. The complex is composed of a catalytic core of 3 subunits MT-CO1, MT-CO2 and MT-CO3, encoded in the mitochondrial DNA, and 11 supernumerary subunits COX4I, COX5A, COX5B, COX6A, COX6B, COX6C, COX7A, COX7B, COX7C, COX8 and NDUFA4, which are encoded in the nuclear genome. The complex exists as a monomer or a dimer and forms supercomplexes (SCs) in the inner mitochondrial membrane with NADH-ubiquinone oxidoreductase (complex I, CI) and ubiquinol-cytochrome c oxidoreductase (cytochrome b-c1 complex, complex III, CIII), resulting in different assemblies (supercomplex SCI(1)III(2)IV(1) and megacomplex MCI(2)III(2)IV(2)). Found in a complex with TMEM177, COA6, COX18, COX20, SCO1 and SCO2. Interacts with TMEM177 in a COX20-dependent manner. Interacts with COX20. Interacts with COX16. It depends on Cu cation as a cofactor.

The protein resides in the mitochondrion inner membrane. It catalyses the reaction 4 Fe(II)-[cytochrome c] + O2 + 8 H(+)(in) = 4 Fe(III)-[cytochrome c] + 2 H2O + 4 H(+)(out). In terms of biological role, component of the cytochrome c oxidase, the last enzyme in the mitochondrial electron transport chain which drives oxidative phosphorylation. The respiratory chain contains 3 multisubunit complexes succinate dehydrogenase (complex II, CII), ubiquinol-cytochrome c oxidoreductase (cytochrome b-c1 complex, complex III, CIII) and cytochrome c oxidase (complex IV, CIV), that cooperate to transfer electrons derived from NADH and succinate to molecular oxygen, creating an electrochemical gradient over the inner membrane that drives transmembrane transport and the ATP synthase. Cytochrome c oxidase is the component of the respiratory chain that catalyzes the reduction of oxygen to water. Electrons originating from reduced cytochrome c in the intermembrane space (IMS) are transferred via the dinuclear copper A center (CU(A)) of subunit 2 and heme A of subunit 1 to the active site in subunit 1, a binuclear center (BNC) formed by heme A3 and copper B (CU(B)). The BNC reduces molecular oxygen to 2 water molecules using 4 electrons from cytochrome c in the IMS and 4 protons from the mitochondrial matrix. In Ailurus fulgens (Himalayan red panda), this protein is Cytochrome c oxidase subunit 2 (MT-CO2).